The sequence spans 316 residues: Pleckstrin homology domain-containing family F member 1 homolog (316 aa).

A PH domain is found at Val-35–Glu-131. An FYVE-type zinc finger spans residues Asp-152–Lys-212. Zn(2+) is bound by residues Cys-158, Cys-161, Cys-175, Cys-178, Cys-183, Cys-186, Cys-204, and Cys-207. The tract at residues Pro-215–Cys-316 is disordered. Over residues Ser-244 to Thr-253 the composition is skewed to acidic residues. The span at Ser-279–Ser-292 shows a compositional bias: low complexity. The span at Val-298–Cys-316 shows a compositional bias: polar residues.

In terms of assembly, interacts with Gdi (Rab GDP dissociation inhibitor). In ovaries, expressed both in the germ line cells and in the overlying somatic follicular epithelium.

The protein resides in the apical cell membrane. The protein localises to the endosome membrane. Its subcellular location is the cytoplasm. It localises to the cell cortex. Functions in the regulation of endosome morphology and late endosome formation. Has a role in controlling trafficking from early to late endosomes and from late endosomes to lysosomes. Important for localization of Gdi to the endosomal membranes. May function in controlling the activity of multiple regulators in the endocytic pathway, perhaps by positively controlling those involved in the early steps of endocytosis such as Rab5 and hrs, and negative regulating those involved in the late stages of endocytosis like car and VhaSFD. In Drosophila melanogaster (Fruit fly), this protein is Pleckstrin homology domain-containing family F member 1 homolog.